We begin with the raw amino-acid sequence, 296 residues long: UPF0761 membrane protein YE0031 (296 aa).

7 helical membrane-spanning segments follow: residues 44–64 (LLSL…FPMF), 67–87 (ISIK…GDII), 108–128 (GLIV…NIIW), 136–156 (LVFS…LVGA), 185–205 (LFPL…VPTV), 212–232 (ALIG…GFTM), and 246–266 (VLAV…IVLL).

This sequence belongs to the UPF0761 family.

It is found in the cell inner membrane. This chain is UPF0761 membrane protein YE0031, found in Yersinia enterocolitica serotype O:8 / biotype 1B (strain NCTC 13174 / 8081).